The sequence spans 542 residues: Putative DEAD-box ATP-dependent RNA helicase 43 (542 aa).

The short motif at 97–125 (KNFMDMKFPSPLLRMLKDKGIMHPTPIQV) is the Q motif element. The 185-residue stretch at 128–312 (LPVVLSGRDM…TSALVKPVTV (185 aa)) folds into the Helicase ATP-binding domain. 141–148 (AFTGSGKT) contacts ATP. The short motif at 260–263 (DEAD) is the DEAD box element. A Helicase C-terminal domain is found at 323-483 (DVIQEVEYVK…RIPPVLAELN (161 aa)). The CCHC-type zinc finger occupies 499-516 (KGCAYCGGLGHRILQCPK).

Belongs to the DEAD box helicase family. DDX41 subfamily.

The catalysed reaction is ATP + H2O = ADP + phosphate + H(+). This is Putative DEAD-box ATP-dependent RNA helicase 43 (RH43) from Arabidopsis thaliana (Mouse-ear cress).